The following is a 460-amino-acid chain: A-type ATP synthase subunit B (460 aa).

The protein belongs to the ATPase alpha/beta chains family. As to quaternary structure, has multiple subunits with at least A(3), B(3), C, D, E, F, H, I and proteolipid K(x).

It is found in the cell membrane. In terms of biological role, component of the A-type ATP synthase that produces ATP from ADP in the presence of a proton gradient across the membrane. The B chain is a regulatory subunit. The polypeptide is A-type ATP synthase subunit B (Thermofilum pendens (strain DSM 2475 / Hrk 5)).